A 376-amino-acid polypeptide reads, in one-letter code: UPF0284 protein glr4139 (376 aa).

Belongs to the UPF0284 family.

The protein is UPF0284 protein glr4139 of Gloeobacter violaceus (strain ATCC 29082 / PCC 7421).